Consider the following 327-residue polypeptide: Eukaryotic translation initiation factor 3 subunit I (327 aa).

WD repeat units lie at residues 8–49 (GHER…GSYD), 51–89 (HNGAVWDIDVSWDTTKCVTASGDLTVKIWDAELGNCLYT), 188–227 (VHRYSVQDLQLSPRGDFLISASRDKTAALLDVNDLKKLKQ), 229–268 (KSERPVNSACISPNRDHICLGGGEDAMQVTQTSVSAGHFE), and 285–324 (GHFGPINTMAWHPSGTIIATGGEDGYIRIQEFDEDYLGFT).

Belongs to the eIF-3 subunit I family. As to quaternary structure, component of the eukaryotic translation initiation factor 3 (eIF-3) complex.

It is found in the cytoplasm. Its function is as follows. Component of the eukaryotic translation initiation factor 3 (eIF-3) complex, which is involved in protein synthesis of a specialized repertoire of mRNAs and, together with other initiation factors, stimulates binding of mRNA and methionyl-tRNAi to the 40S ribosome. The eIF-3 complex specifically targets and initiates translation of a subset of mRNAs involved in cell proliferation. The protein is Eukaryotic translation initiation factor 3 subunit I of Caenorhabditis elegans.